A 329-amino-acid chain; its full sequence is Fructose-1,6-bisphosphatase class 1 (329 aa).

Residues E84, D103, L105, and D106 each contribute to the Mg(2+) site. Residues 106–109 (DGSS), N196, and K262 each bind substrate. E268 contacts Mg(2+).

It belongs to the FBPase class 1 family. In terms of assembly, homotetramer. It depends on Mg(2+) as a cofactor.

Its subcellular location is the cytoplasm. The enzyme catalyses beta-D-fructose 1,6-bisphosphate + H2O = beta-D-fructose 6-phosphate + phosphate. The protein operates within carbohydrate biosynthesis; gluconeogenesis. The sequence is that of Fructose-1,6-bisphosphatase class 1 from Shewanella sediminis (strain HAW-EB3).